The chain runs to 492 residues: 56 kDa U1 small nuclear ribonucleoprotein component (492 aa).

Over residues 1 to 15 (MRPRRRGLAYHHTKP) the composition is skewed to basic residues. Disordered regions lie at residues 1–35 (MRPR…QRRK) and 300–371 (DQFP…NKPG). The segment covering 18–30 (QLSQGHYPTTSND) has biased composition (polar residues). The segment covering 310–321 (SNSPSSNSISSS) has biased composition (low complexity). Residues 329–353 (TSYQTQPQRHAVNKPSNVLNSSNRH) are compositionally biased toward polar residues.

As to quaternary structure, component of the 18S U1 snRNP particle, a subcomplex of the spliceosome. Interacts with the nuclear cap-binding complex CBC1-CBC2 (yCBC). Directly contacts intronic sequences of substrate pre-RNA.

It is found in the nucleus. Its function is as follows. Component of the U1 snRNP particle, which recognizes and binds the 5'-splice site of pre-mRNA. Together with other non-snRNP factors, U1 snRNP forms the spliceosomal commitment complex, that targets pre-mRNA to the splicing pathway. The sequence is that of 56 kDa U1 small nuclear ribonucleoprotein component (SNU56) from Saccharomyces cerevisiae (strain ATCC 204508 / S288c) (Baker's yeast).